An 847-amino-acid chain; its full sequence is FAST kinase domain-containing protein 1, mitochondrial (847 aa).

Lys360 is modified (N6-acetyllysine). The region spanning 777-837 (IALEFLDSKA…KDARMDYLRE (61 aa)) is the RAP domain.

Belongs to the FAST kinase family. In terms of tissue distribution, expression detected in spleen, thymus, testis, ovary, colon, heart, smooth muscle, kidney, brain, lung, liver and white adipose tissue with highest expression in heart.

It is found in the mitochondrion. In terms of biological role, involved in the down-regulation of mitochondrial MT-ND3 mRNA levels which leads to decreased respiratory complex I abundance and activity. The protein is FAST kinase domain-containing protein 1, mitochondrial (FASTKD1) of Homo sapiens (Human).